The following is a 336-amino-acid chain: Ferredoxin--NADP reductase (336 aa).

FAD is bound by residues glutamate 34, glutamine 42, tyrosine 47, valine 87, phenylalanine 121, aspartate 286, and serine 326.

Belongs to the ferredoxin--NADP reductase type 2 family. As to quaternary structure, homodimer. The cofactor is FAD.

The catalysed reaction is 2 reduced [2Fe-2S]-[ferredoxin] + NADP(+) + H(+) = 2 oxidized [2Fe-2S]-[ferredoxin] + NADPH. This Leuconostoc mesenteroides subsp. mesenteroides (strain ATCC 8293 / DSM 20343 / BCRC 11652 / CCM 1803 / JCM 6124 / NCDO 523 / NBRC 100496 / NCIMB 8023 / NCTC 12954 / NRRL B-1118 / 37Y) protein is Ferredoxin--NADP reductase.